We begin with the raw amino-acid sequence, 597 residues long: Hydrogenase-1 large chain (597 aa).

Residues cysteine 76, cysteine 79, cysteine 576, and cysteine 579 each contribute to the Ni(2+) site.

Belongs to the [NiFe]/[NiFeSe] hydrogenase large subunit family. Heterodimer of a large and a small subunit. Ni(2+) serves as cofactor.

It is found in the cell membrane. It catalyses the reaction H2 + A = AH2. In terms of biological role, this is one of three E.coli hydrogenases synthesized in response to different physiological conditions. HYD1 is believed to have a role in hydrogen cycling during fermentative growth. This Escherichia coli (strain K12) protein is Hydrogenase-1 large chain (hyaB).